A 498-amino-acid chain; its full sequence is ATP synthase subunit beta, chloroplastic (498 aa).

Residues 1–14 (MRTNPTTSRPGVST) show a composition bias toward polar residues. Positions 1–20 (MRTNPTTSRPGVSTSEEKST) are disordered. 172–179 (GGAGVGKT) is a binding site for ATP.

Belongs to the ATPase alpha/beta chains family. F-type ATPases have 2 components, CF(1) - the catalytic core - and CF(0) - the membrane proton channel. CF(1) has five subunits: alpha(3), beta(3), gamma(1), delta(1), epsilon(1). CF(0) has four main subunits: a(1), b(1), b'(1) and c(9-12).

Its subcellular location is the plastid. It localises to the chloroplast thylakoid membrane. The catalysed reaction is ATP + H2O + 4 H(+)(in) = ADP + phosphate + 5 H(+)(out). Its function is as follows. Produces ATP from ADP in the presence of a proton gradient across the membrane. The catalytic sites are hosted primarily by the beta subunits. This Hordeum vulgare (Barley) protein is ATP synthase subunit beta, chloroplastic.